The primary structure comprises 418 residues: eIF5-mimic protein 2 (418 aa).

Polar residues predominate over residues 1–14; sequence MNQKQQKPTLSGQR. Positions 1–25 are disordered; sequence MNQKQQKPTLSGQRFKTRKRDEKER. Positions 246–413 constitute a W2 domain; sequence NQQTIGARKE…KNAEEESESE (168 aa).

Belongs to the BZW family.

Translation initiation regulator which may repress repeat-associated non-AUG (RAN) initiated translation probably by acting as a competitive inhibitor of eukaryotic translation initiation factor 5 (EIF5) function. Enhances histone H4 gene transcription but does not seem to bind DNA directly. This chain is eIF5-mimic protein 2 (BZW1), found in Gallus gallus (Chicken).